The sequence spans 57 residues: Bowman-Birk type proteinase inhibitor B4 (57 aa).

4 disulfides stabilise this stretch: cysteine 6-cysteine 55, cysteine 12-cysteine 17, cysteine 26-cysteine 33, and cysteine 30-cysteine 47.

It belongs to the Bowman-Birk serine protease inhibitor family. As to expression, expressed in bulb (at protein level).

Its function is as follows. Serine protease inhibitor. Inhibits trypsin (Ki = 110 nM) and very weakly inhibits chymotrypsin (Ki =1200 nM). Does not inhibit bacterial subtilisin. The polypeptide is Bowman-Birk type proteinase inhibitor B4 (Hyacinthus orientalis (Common hyacinth)).